We begin with the raw amino-acid sequence, 434 residues long: Methylenetetrahydrofolate--tRNA-(uracil-5-)-methyltransferase TrmFO (434 aa).

An FAD-binding site is contributed by 9–14 (GAGLAG).

Belongs to the MnmG family. TrmFO subfamily. FAD is required as a cofactor.

Its subcellular location is the cytoplasm. It catalyses the reaction uridine(54) in tRNA + (6R)-5,10-methylene-5,6,7,8-tetrahydrofolate + NADH + H(+) = 5-methyluridine(54) in tRNA + (6S)-5,6,7,8-tetrahydrofolate + NAD(+). The catalysed reaction is uridine(54) in tRNA + (6R)-5,10-methylene-5,6,7,8-tetrahydrofolate + NADPH + H(+) = 5-methyluridine(54) in tRNA + (6S)-5,6,7,8-tetrahydrofolate + NADP(+). Catalyzes the folate-dependent formation of 5-methyl-uridine at position 54 (M-5-U54) in all tRNAs. The protein is Methylenetetrahydrofolate--tRNA-(uracil-5-)-methyltransferase TrmFO of Listeria innocua serovar 6a (strain ATCC BAA-680 / CLIP 11262).